Consider the following 267-residue polypeptide: Cell division control protein 11 (267 aa).

Positions 6-263 constitute a Septin-type G domain; it reads QNRRFTIMAA…ENYRAAVLEG (258 aa). The tract at residues 16–23 is G1 motif; the sequence is GPRGSGKS. GTP is bound by residues 16 to 23, G66, 146 to 154, and R212; these read GPRGSGKS and KSDGLSITE. Residues 63-66 form a G3 motif region; that stretch reads DTPG. The G4 motif stretch occupies residues 145–148; it reads SKSD.

It belongs to the TRAFAC class TrmE-Era-EngA-EngB-Septin-like GTPase superfamily. Septin GTPase family. In terms of assembly, component of the septin complex.

Its function is as follows. Septins are GTPases involved in cytokinesis. The septins localize to the site of cleavage and act as a structural scaffold that recruits different components involved in diverse processes at specific stages during the cell cycle. Septins are also involved in cell morphogenesis, chitin deposition, cell cycle regulation, cell compartmentalization and spore wall formation. This Encephalitozoon cuniculi (strain GB-M1) (Microsporidian parasite) protein is Cell division control protein 11 (CDC11).